Reading from the N-terminus, the 191-residue chain is RNA polymerase sigma factor CnrH (191 aa).

The Polymerase core binding motif lies at aspartate 49 to leucine 62. The H-T-H motif DNA-binding region spans glutamine 156–glycine 175.

Belongs to the sigma-70 factor family. ECF subfamily.

Its function is as follows. Sigma factors are initiation factors that promote the attachment of RNA polymerase to specific initiation sites and are then released. This sigma factor regulates the genes for a membrane-located efflux system that confers resistance to nickel and cobalt. CnrH alone is able to activate CNR expression, while both CnrY and CrnX are needed for nickel induction of cnrH. Binds DNA in an RNA polymerase-dependent fashion. CnrH may be controlled by a CnrYX transmembrane anti-sigma factor complex which binds CnrH in the absence of Ni(2+). If Ni(2+) appears in the periplasm, it may be bound by CnrR (CnrX); the signal then would be transmitted by CnrY into the cytoplasm and CnrH would be released. In Cupriavidus metallidurans (strain ATCC 43123 / DSM 2839 / NBRC 102507 / CH34) (Ralstonia metallidurans), this protein is RNA polymerase sigma factor CnrH (cnrH).